We begin with the raw amino-acid sequence, 335 residues long: Holliday junction branch migration complex subunit RuvB (335 aa).

A large ATPase domain (RuvB-L) region spans residues 1-181 (MERIVEVEKF…FGMHFRLQFY (181 aa)). Residues Leu-20, Arg-21, Gly-62, Lys-65, Thr-66, Thr-67, 128 to 130 (EDF), Arg-171, Tyr-181, and Arg-218 contribute to the ATP site. Position 66 (Thr-66) interacts with Mg(2+). Positions 182–252 (TPQELAQIIT…RTQKALEALG (71 aa)) are small ATPAse domain (RuvB-S). Positions 255 to 335 (ERGFDELDLK…LTPNIQNSLF (81 aa)) are head domain (RuvB-H). DNA-binding residues include Arg-309 and Arg-314.

It belongs to the RuvB family. As to quaternary structure, homohexamer. Forms an RuvA(8)-RuvB(12)-Holliday junction (HJ) complex. HJ DNA is sandwiched between 2 RuvA tetramers; dsDNA enters through RuvA and exits via RuvB. An RuvB hexamer assembles on each DNA strand where it exits the tetramer. Each RuvB hexamer is contacted by two RuvA subunits (via domain III) on 2 adjacent RuvB subunits; this complex drives branch migration. In the full resolvosome a probable DNA-RuvA(4)-RuvB(12)-RuvC(2) complex forms which resolves the HJ.

It is found in the cytoplasm. It carries out the reaction ATP + H2O = ADP + phosphate + H(+). The RuvA-RuvB-RuvC complex processes Holliday junction (HJ) DNA during genetic recombination and DNA repair, while the RuvA-RuvB complex plays an important role in the rescue of blocked DNA replication forks via replication fork reversal (RFR). RuvA specifically binds to HJ cruciform DNA, conferring on it an open structure. The RuvB hexamer acts as an ATP-dependent pump, pulling dsDNA into and through the RuvAB complex. RuvB forms 2 homohexamers on either side of HJ DNA bound by 1 or 2 RuvA tetramers; 4 subunits per hexamer contact DNA at a time. Coordinated motions by a converter formed by DNA-disengaged RuvB subunits stimulates ATP hydrolysis and nucleotide exchange. Immobilization of the converter enables RuvB to convert the ATP-contained energy into a lever motion, pulling 2 nucleotides of DNA out of the RuvA tetramer per ATP hydrolyzed, thus driving DNA branch migration. The RuvB motors rotate together with the DNA substrate, which together with the progressing nucleotide cycle form the mechanistic basis for DNA recombination by continuous HJ branch migration. Branch migration allows RuvC to scan DNA until it finds its consensus sequence, where it cleaves and resolves cruciform DNA. The protein is Holliday junction branch migration complex subunit RuvB of Nitratiruptor sp. (strain SB155-2).